Here is a 472-residue protein sequence, read N- to C-terminus: Pyridine nucleotide-disulfide oxidoreductase domain-containing protein 1 (472 aa).

Belongs to the class-I pyridine nucleotide-disulfide oxidoreductase family. PYROXD1 subfamily. FAD is required as a cofactor.

In terms of biological role, probable oxidoreductase. The chain is Pyridine nucleotide-disulfide oxidoreductase domain-containing protein 1 from Drosophila melanogaster (Fruit fly).